Consider the following 90-residue polypeptide: Small ribosomal subunit protein uS15c (90 aa).

It belongs to the universal ribosomal protein uS15 family. In terms of assembly, part of the 30S ribosomal subunit.

The protein localises to the plastid. It localises to the chloroplast. This chain is Small ribosomal subunit protein uS15c (rps15), found in Phaseolus vulgaris (Kidney bean).